A 494-amino-acid polypeptide reads, in one-letter code: 3-octaprenyl-4-hydroxybenzoate carboxy-lyase (494 aa).

Residue Asn172 coordinates Mn(2+). Residues 175–177 (IYR), 189–191 (RWL), and 194–195 (RG) contribute to the prenylated FMN site. A Mn(2+)-binding site is contributed by Glu238. Asp294 acts as the Proton donor in catalysis.

This sequence belongs to the UbiD family. As to quaternary structure, homohexamer. Prenylated FMN is required as a cofactor. It depends on Mn(2+) as a cofactor.

Its subcellular location is the cell membrane. The catalysed reaction is a 4-hydroxy-3-(all-trans-polyprenyl)benzoate + H(+) = a 2-(all-trans-polyprenyl)phenol + CO2. It participates in cofactor biosynthesis; ubiquinone biosynthesis. Catalyzes the decarboxylation of 3-octaprenyl-4-hydroxy benzoate to 2-octaprenylphenol, an intermediate step in ubiquinone biosynthesis. The sequence is that of 3-octaprenyl-4-hydroxybenzoate carboxy-lyase from Herminiimonas arsenicoxydans.